A 209-amino-acid polypeptide reads, in one-letter code: HTH-type transcriptional repressor BepR (209 aa).

The HTH tetR-type domain maps to 9–69 (AETREAILLA…SIIGRARFPQ (61 aa)). A DNA-binding region (H-T-H motif) is located at residues 32-51 (TLTEIACYAGVTRGAIYFHF).

Functionally, represses expression of bepDE. This chain is HTH-type transcriptional repressor BepR (bepR), found in Brucella suis biovar 1 (strain 1330).